The following is a 387-amino-acid chain: Prostatic acid phosphatase (387 aa).

A signal peptide spans 1–34 (MRNAALLMTRATSLRLSLLLLLSFLPDLDGGVRA). Arg45 serves as a coordination point for substrate. His46 acts as the Nucleophile in catalysis. Arg49 lines the substrate pocket. Asn96 carries an N-linked (GlcNAc...) asparagine glycan. Position 113 (Arg113) interacts with substrate. 3 disulfide bridges follow: Cys163/Cys374, Cys217/Cys315, and Cys349/Cys353. Asn222 carries N-linked (GlcNAc...) asparagine glycosylation. His291 contributes to the substrate binding site. The active-site Proton donor is the Asp292. The N-linked (GlcNAc...) asparagine glycan is linked to Asn335.

The protein belongs to the histidine acid phosphatase family. Homodimer; dimer formation is required for phosphatase activity.

It is found in the secreted. The catalysed reaction is a phosphate monoester + H2O = an alcohol + phosphate. The enzyme catalyses 1-(9Z-octadecenoyl)-sn-glycero-3-phosphate + H2O = 1-(9Z-octadecenoyl)-sn-glycerol + phosphate. It carries out the reaction O-phospho-L-tyrosyl-[protein] + H2O = L-tyrosyl-[protein] + phosphate. Its function is as follows. A non-specific tyrosine phosphatase that dephosphorylates a diverse number of substrates under acidic conditions (pH 4-6) including alkyl, aryl, and acyl orthophosphate monoesters and phosphorylated proteins. Has lipid phosphatase activity and inactivates lysophosphatidic acid in seminal plasma. The sequence is that of Prostatic acid phosphatase (ACP3) from Bos taurus (Bovine).